We begin with the raw amino-acid sequence, 274 residues long: Caldesmon, smooth muscle (274 aa).

Disordered regions lie at residues 1–102 (SNLK…FSPK) and 179–274 (KGNV…EKEP). Basic and acidic residues-rich tracts occupy residues 12–21 (GSEKLKEKQQ) and 28–95 (DELK…EKKP). The span at 182 to 194 (VFSSPGGTGTPNK) shows a compositional bias: polar residues. 2 stretches are compositionally biased toward basic and acidic residues: residues 226 to 245 (SDLR…KQSV) and 260 to 274 (KKSE…EKEP).

The protein resides in the cytoplasm. It localises to the cytoskeleton. Its subcellular location is the myofibril. The protein localises to the stress fiber. Control of actomyosin interactions in smooth muscle and nonmuscle cells (could act as a bridge between myosin and actin filaments). Inhibits the actin-activated ATPase of myosin this inhibition is attenuated by calcium-calmodulin and is potentiated by tropomyosin. Interacts with actin, myosin, 2 molecules of tropomyosin and with calmodulin. This is Caldesmon, smooth muscle (CALD1) from Meleagris gallopavo (Wild turkey).